A 626-amino-acid chain; its full sequence is Janus kinase and microtubule-interacting protein 1 (626 aa).

Positions M1–V365 are mediates association with microtubules. Coiled coils occupy residues V19–E254 and E284–S413. The segment at V365 to M626 is mediates interaction with TYK2 and GABBR1. S382 is modified (phosphoserine). The span at E452–T461 shows a compositional bias: polar residues. A disordered region spans residues E452–T480. T470 carries the phosphothreonine modification. Positions Q490–R604 form a coiled coil.

Belongs to the JAKMIP family. As to quaternary structure, homodimer. Forms a complex with GABBR1 and KIF5B/kinesin-1. Interacts with JAK1 and TYK2. Post-translationally, phosphorylated.

It localises to the cytoplasm. The protein resides in the cytoskeleton. It is found in the membrane. Its function is as follows. Associates with microtubules and may play a role in the microtubule-dependent transport of the GABA-B receptor. May play a role in JAK1 signaling and regulate microtubule cytoskeleton rearrangements. This chain is Janus kinase and microtubule-interacting protein 1 (JAKMIP1), found in Bos taurus (Bovine).